An 86-amino-acid chain; its full sequence is Small ribosomal subunit protein bS16 (86 aa).

It belongs to the bacterial ribosomal protein bS16 family.

This is Small ribosomal subunit protein bS16 from Syntrophotalea carbinolica (strain DSM 2380 / NBRC 103641 / GraBd1) (Pelobacter carbinolicus).